The sequence spans 401 residues: Tryptophan synthase beta chain (401 aa).

Position 92 is an N6-(pyridoxal phosphate)lysine (Lys92).

This sequence belongs to the TrpB family. Tetramer of two alpha and two beta chains. It depends on pyridoxal 5'-phosphate as a cofactor.

The enzyme catalyses (1S,2R)-1-C-(indol-3-yl)glycerol 3-phosphate + L-serine = D-glyceraldehyde 3-phosphate + L-tryptophan + H2O. It functions in the pathway amino-acid biosynthesis; L-tryptophan biosynthesis; L-tryptophan from chorismate: step 5/5. The beta subunit is responsible for the synthesis of L-tryptophan from indole and L-serine. This is Tryptophan synthase beta chain from Vesicomyosocius okutanii subsp. Calyptogena okutanii (strain HA).